The sequence spans 658 residues: Glycogen debranching enzyme (658 aa).

Asp336 acts as the Nucleophile in catalysis. Catalysis depends on Glu371, which acts as the Proton donor. Residues 459–483 are disordered; the sequence is EANGEENRDGTNSNYSDNHGKEGLG.

This sequence belongs to the glycosyl hydrolase 13 family.

The catalysed reaction is Hydrolysis of (1-&gt;6)-alpha-D-glucosidic linkages to branches with degrees of polymerization of three or four glucose residues in limit dextrin.. It functions in the pathway glycan degradation; glycogen degradation. Its function is as follows. Removes maltotriose and maltotetraose chains that are attached by 1,6-alpha-linkage to the limit dextrin main chain, generating a debranched limit dextrin. This chain is Glycogen debranching enzyme, found in Salmonella agona (strain SL483).